The sequence spans 179 residues: Large ribosomal subunit protein uL5 (179 aa).

It belongs to the universal ribosomal protein uL5 family. As to quaternary structure, part of the 50S ribosomal subunit; part of the 5S rRNA/L5/L18/L25 subcomplex. Contacts the 5S rRNA and the P site tRNA. Forms a bridge to the 30S subunit in the 70S ribosome.

This is one of the proteins that bind and probably mediate the attachment of the 5S RNA into the large ribosomal subunit, where it forms part of the central protuberance. In the 70S ribosome it contacts protein S13 of the 30S subunit (bridge B1b), connecting the 2 subunits; this bridge is implicated in subunit movement. Contacts the P site tRNA; the 5S rRNA and some of its associated proteins might help stabilize positioning of ribosome-bound tRNAs. The polypeptide is Large ribosomal subunit protein uL5 (Rickettsia africae (strain ESF-5)).